A 206-amino-acid polypeptide reads, in one-letter code: 7-methyl-GTP pyrophosphatase (206 aa).

The active-site Proton acceptor is the aspartate 82.

The protein belongs to the Maf family. YceF subfamily. Requires a divalent metal cation as cofactor.

It is found in the cytoplasm. The catalysed reaction is N(7)-methyl-GTP + H2O = N(7)-methyl-GMP + diphosphate + H(+). Nucleoside triphosphate pyrophosphatase that hydrolyzes 7-methyl-GTP (m(7)GTP). May have a dual role in cell division arrest and in preventing the incorporation of modified nucleotides into cellular nucleic acids. This Shewanella denitrificans (strain OS217 / ATCC BAA-1090 / DSM 15013) protein is 7-methyl-GTP pyrophosphatase.